The sequence spans 382 residues: Sphingosine 1-phosphate receptor 1 (382 aa).

Residues 1–46 (MGSTRIPLVKALHSPVSDYVNYDIIVRHYNYTGKLKISADKDNGIK) lie on the Extracellular side of the membrane. N6-acetyllysine is present on lysine 10. A glycan (N-linked (GlcNAc...) asparagine) is linked at asparagine 30. Residues 47 to 68 (LISVVFILICCFIILENIFVLL) form a helical membrane-spanning segment. Residues 69 to 82 (TIWKTKKFHRPMYY) are Cytoplasmic-facing. A helical transmembrane segment spans residues 83-104 (FIGNLALSDLLAGVAYTANLLL). The Extracellular portion of the chain corresponds to 105–116 (SGATTYKLTPAQ). Residues 117–138 (WFLREGSMFVALSASVFSLLAI) traverse the membrane as a helical segment. 120-121 (RE) is a binding site for sphing-4-enine 1-phosphate. At 139-160 (AIERYITMLKMKLHNGSNRFRS) the chain is on the cytoplasmic side. Residues 161 to 182 (FLLISACWVISLILGGLPIMGW) traverse the membrane as a helical segment. Over 183–196 (NCISTLPSCSTVLP) the chain is Extracellular. A disulfide bridge connects residues cysteine 184 and cysteine 191. Residues 197–224 (LYHKHYILFCTTVFTLLLLSIVILYCRI) traverse the membrane as a helical segment. The Cytoplasmic segment spans residues 225-257 (YSLVRTRSRRLTFRKNISKASRSSEKSLALLKT). A Phosphothreonine; by PKB/AKT1 modification is found at threonine 236. The helical transmembrane segment at 258–278 (VIIVLGVFIACWAPLFILLLL) threads the bilayer. A sphing-4-enine 1-phosphate-binding site is contributed by 265–269 (FIACW). Topologically, residues 279 to 289 (DVGCKVKTCDI) are extracellular. A disulfide bond links cysteine 282 and cysteine 287. A helical transmembrane segment spans residues 290-310 (LFRTEYFLVLAVLNSGTNPII). The Cytoplasmic portion of the chain corresponds to 311–382 (YTLSNKEMRR…MSSGNVNSSS (72 aa)). Residue cysteine 328 is the site of S-palmitoyl cysteine attachment. The segment at 349–382 (EFSRSKSDNSSHPQKDDGDNPETIMSSGNVNSSS) is disordered. Serine 351 and serine 353 each carry phosphoserine. Basic and acidic residues predominate over residues 351–366 (SRSKSDNSSHPQKDDG). Residues 371–382 (TIMSSGNVNSSS) show a composition bias toward polar residues.

Belongs to the G-protein coupled receptor 1 family. Interacts with GNAI1 and GNAI3. Interacts with CD69; this interaction promotes S1PR1 degradation. S1P-induced endothelial cell migration requires the PKB/AKT1-mediated phosphorylation of the third intracellular loop at the Thr-236 residue. In terms of processing, palmitoylated by ZDHHC5. Palmitoylation is required for targeting to plasma membrane, enabling G(i) coupling.

The protein localises to the cell membrane. Its subcellular location is the endosome. The protein resides in the membrane raft. Its function is as follows. G-protein coupled receptor for the bioactive lysosphingolipid sphingosine 1-phosphate (S1P) that seems to be coupled to the G(i) subclass of heteromeric G proteins. Signaling leads to the activation of RAC1, SRC, PTK2/FAK1 and MAP kinases. Plays an important role in cell migration, probably via its role in the reorganization of the actin cytoskeleton and the formation of lamellipodia in response to stimuli that increase the activity of the sphingosine kinase SPHK1. Required for normal chemotaxis toward sphingosine 1-phosphate. Required for normal embryonic heart development and normal cardiac morphogenesis. Plays an important role in the regulation of sprouting angiogenesis and vascular maturation. Inhibits sprouting angiogenesis to prevent excessive sprouting during blood vessel development. Required for normal egress of mature T-cells from the thymus into the blood stream and into peripheral lymphoid organs. Plays a role in the migration of osteoclast precursor cells, the regulation of bone mineralization and bone homeostasis. Plays a role in responses to oxidized 1-palmitoyl-2-arachidonoyl-sn-glycero-3-phosphocholine by pulmonary endothelial cells and in the protection against ventilator-induced lung injury. In Bos taurus (Bovine), this protein is Sphingosine 1-phosphate receptor 1 (S1PR1).